A 397-amino-acid polypeptide reads, in one-letter code: Ribosomal RNA large subunit methyltransferase I (397 aa).

The PUA domain occupies 2 to 81; that stretch reads STTVYLQKDR…EQIDTEFFVR (80 aa).

This sequence belongs to the methyltransferase superfamily. RlmI family.

The protein localises to the cytoplasm. It carries out the reaction cytidine(1962) in 23S rRNA + S-adenosyl-L-methionine = 5-methylcytidine(1962) in 23S rRNA + S-adenosyl-L-homocysteine + H(+). Specifically methylates the cytosine at position 1962 (m5C1962) of 23S rRNA. This is Ribosomal RNA large subunit methyltransferase I from Tolumonas auensis (strain DSM 9187 / NBRC 110442 / TA 4).